Consider the following 322-residue polypeptide: Replication factor C small subunit 2 (322 aa).

ATP is bound at residue 44–51; that stretch reads GPPGTGKT.

This sequence belongs to the activator 1 small subunits family. RfcS subfamily. In terms of assembly, heteromultimer composed of small subunits (RfcS) and large subunits (RfcL).

Part of the RFC clamp loader complex which loads the PCNA sliding clamp onto DNA. The chain is Replication factor C small subunit 2 from Pyrobaculum arsenaticum (strain DSM 13514 / JCM 11321 / PZ6).